A 938-amino-acid chain; its full sequence is Isoleucine--tRNA ligase (938 aa).

The 'HIGH' region motif lies at 58–68 (PYANGSIHIGH). Lys-183 carries the post-translational modification N6-acetyllysine. Glu-561 is an L-isoleucyl-5'-AMP binding site. Positions 602–606 (KMSKS) match the 'KMSKS' region motif. Lys-605 provides a ligand contact to ATP. Positions 901, 904, 921, and 924 each coordinate Zn(2+).

This sequence belongs to the class-I aminoacyl-tRNA synthetase family. IleS type 1 subfamily. In terms of assembly, monomer. Zn(2+) serves as cofactor.

It localises to the cytoplasm. It catalyses the reaction tRNA(Ile) + L-isoleucine + ATP = L-isoleucyl-tRNA(Ile) + AMP + diphosphate. In terms of biological role, catalyzes the attachment of isoleucine to tRNA(Ile). As IleRS can inadvertently accommodate and process structurally similar amino acids such as valine, to avoid such errors it has two additional distinct tRNA(Ile)-dependent editing activities. One activity is designated as 'pretransfer' editing and involves the hydrolysis of activated Val-AMP. The other activity is designated 'posttransfer' editing and involves deacylation of mischarged Val-tRNA(Ile). This is Isoleucine--tRNA ligase from Escherichia coli O7:K1 (strain IAI39 / ExPEC).